A 345-amino-acid polypeptide reads, in one-letter code: Fructose-1,6-bisphosphatase class 1 (345 aa).

Residues E90, D109, L111, and D112 each contribute to the Mg(2+) site. Substrate contacts are provided by residues D112–S115 and N200. A Mg(2+)-binding site is contributed by E272.

It belongs to the FBPase class 1 family. As to quaternary structure, homotetramer. It depends on Mg(2+) as a cofactor.

It is found in the cytoplasm. The enzyme catalyses beta-D-fructose 1,6-bisphosphate + H2O = beta-D-fructose 6-phosphate + phosphate. It participates in carbohydrate biosynthesis; gluconeogenesis. The protein is Fructose-1,6-bisphosphatase class 1 of Bradyrhizobium diazoefficiens (strain JCM 10833 / BCRC 13528 / IAM 13628 / NBRC 14792 / USDA 110).